A 239-amino-acid polypeptide reads, in one-letter code: Adapter protein MecA (239 aa).

Basic and acidic residues predominate over residues 118-128 (EQRTKEKEAQG). Residues 118–137 (EQRTKEKEAQGSKRQKSSAR) form a disordered region.

This sequence belongs to the MecA family. As to quaternary structure, homodimer.

Functionally, enables the recognition and targeting of unfolded and aggregated proteins to the ClpC protease or to other proteins involved in proteolysis. This Staphylococcus aureus (strain Mu3 / ATCC 700698) protein is Adapter protein MecA.